The following is a 335-amino-acid chain: Antigen-presenting glycoprotein CD1d (335 aa).

Residues 1 to 17 (MGCLLFLVLLEFQKIWG) form the signal peptide. The Extracellular segment spans residues 18 to 304 (SFEAPQTSFP…WDGKRVSRGL (287 aa)). 2 N-linked (GlcNAc...) asparagine glycosylation sites follow: asparagine 38 and asparagine 60. Aspartate 98 contributes to the a D-galactosylceramide binding site. 2 disulfides stabilise this stretch: cysteine 120–cysteine 184 and cysteine 224–cysteine 279. N-linked (GlcNAc...) asparagine glycosylation occurs at asparagine 126. Residues aspartate 169, 169–172 (DQGT), and threonine 172 each bind a D-galactosylceramide. An Ig-like domain is found at 185-295 (PELVKGLMQT…LGDQDIILYW (111 aa)). A helical transmembrane segment spans residues 305 to 325 (IVVLVILVFVLLFVGGLVFWF). At 326-335 (RKHRRYQDIS) the chain is on the cytoplasmic side. Positions 331 to 334 (YQDI) match the Internalization signal motif.

Heterodimer with B2M (beta-2-microglobulin). Interacts with MHC II and CD74. As to expression, expressed on cortical thymocytes, on certain T-cell leukemias, and in various other tissues.

The protein resides in the cell membrane. Its subcellular location is the basolateral cell membrane. It localises to the endosome membrane. It is found in the lysosome membrane. The protein localises to the endoplasmic reticulum membrane. Antigen-presenting protein that binds self and non-self glycolipids and presents them to T-cell receptors on natural killer T-cells. This is Antigen-presenting glycoprotein CD1d (CD1D) from Ovis aries (Sheep).